An 89-amino-acid polypeptide reads, in one-letter code: Serine-rich and transmembrane domain-containing 2 (89 aa).

N-linked (GlcNAc...) asparagine glycosylation occurs at asparagine 11. A helical transmembrane segment spans residues 38-58 (YVGLFLSLLAILLILLFTMLL).

The protein resides in the membrane. This Mus musculus (Mouse) protein is Serine-rich and transmembrane domain-containing 2.